The sequence spans 602 residues: NAD-dependent protein deacetylase sir-2.1 (602 aa).

Residues 25–57 form a disordered region; sequence PEIETMHIENSVEGESGRQRTESTASVNSESWQ. Residues 46–57 show a composition bias toward polar residues; the sequence is ESTASVNSESWQ. The Deacetylase sirtuin-type domain maps to 119–374; that stretch reads KLFTYNSLSD…RDICYALGGS (256 aa). NAD(+) is bound by residues 144-163 and 228-231; these read GAGVSVSCGIPDFRSKDGIY and QNID. The Proton acceptor role is filled by His246. Zn(2+)-binding residues include Cys254, Cys257, Cys278, and Cys281. Residues 318 to 320, 343 to 345, and Cys360 contribute to the NAD(+) site; these read GSS and NRE. Disordered regions lie at residues 411–468 and 520–551; these read QERR…SDEV and RNRHESDSSCESCSTVPGSDKSEANPLSRSQS.

This sequence belongs to the sirtuin family. Class I subfamily. In terms of assembly, interacts with ftt-2 and par-5. Interacts with daf-16 following heat-shock, which causes daf-16 to accumulate in the nucleus. Interaction with daf-16 is promoted by ftt-2. It depends on Zn(2+) as a cofactor.

Its subcellular location is the nucleus. It carries out the reaction N(6)-acetyl-L-lysyl-[protein] + NAD(+) + H2O = 2''-O-acetyl-ADP-D-ribose + nicotinamide + L-lysyl-[protein]. Functionally, NAD-dependent deacetylase. Required for a reduction of the 'Lys-16' acetylation of histone H4 (H4K16ac) on dosage-compensated X chromosomes in hermaphrodites. Functions upstream of daf-16 in the insulin-like signaling pathway, promoting daf-16 mediated transcriptional activation and increased life-span. May also regulate life-span independently of daf-16 by modulating the transcription of genes involved in the stress response of the endoplasmic reticulum (ER). Acts upstream of the nicotinic acid metabolism pathway, which may be linked to the regulation of longevity. Plays a role in ascaroside-mediated longevity and stress resistance. The chain is NAD-dependent protein deacetylase sir-2.1 (sir-2.1) from Caenorhabditis briggsae.